A 283-amino-acid polypeptide reads, in one-letter code: Pseudokinase OPG198 (283 aa).

Positions 1 and 30 each coordinate ATP. In terms of domain architecture, Protein kinase spans 1–283; it reads MESFKYCFDN…DRLRKLFIQD (283 aa).

Belongs to the protein kinase superfamily. Ser/Thr protein kinase family. Poxviruses subfamily. Interacts with B1/VPK1. Interacts with host VRK1. Interacts with host VRK2.

It localises to the host nucleus. Both catalytically active kinases B1/VPK1 and host VRK2 repress B12 inhibitory activity in a B1/VPK1 deletion mutant strain. Pseudokinase that plays a role in viral DNA replication repression by activating the antiviral protein BANF1 and inhibiting the activity of host VRK1, a cellular modulator of BANF1. The chain is Pseudokinase OPG198 (OPG198) from Vaccinia virus (strain Western Reserve) (VACV).